The primary structure comprises 61 residues: Sperm protamine P1 (61 aa).

The disordered stretch occupies residues 1–61 (MARYRHSRSR…RRYSRRRRRY (61 aa)).

This sequence belongs to the protamine P1 family. In terms of tissue distribution, testis.

It is found in the nucleus. It localises to the chromosome. Functionally, protamines substitute for histones in the chromatin of sperm during the haploid phase of spermatogenesis. They compact sperm DNA into a highly condensed, stable and inactive complex. The polypeptide is Sperm protamine P1 (PRM1) (Potorous longipes (Long-footed potoroo)).